The sequence spans 446 residues: Inhibitor of Apoptosis OPG037 (446 aa).

ANK repeat units follow at residues 71 to 100, 104 to 135, 207 to 237, 241 to 271, 296 to 325, and 327 to 351; these read DGNY…DPNA, QHKT…KINN, DGNT…DVNK, FGDS…VITD, YDST…ICED, and MYYA…SVDS.

It belongs to the orthopoxvirus OPG037 protein family. In terms of assembly, may interact with host caspase-9-Apaf-1 complex.

It is found in the host cytoplasm. In terms of biological role, inhibits host apoptosis. Acts by associating with host apoptosome. The chain is Inhibitor of Apoptosis OPG037 (OPG037) from Variola virus (isolate Human/India/Ind3/1967) (VARV).